The following is a 224-amino-acid chain: 7-cyano-7-deazaguanine synthase (224 aa).

An ATP-binding site is contributed by 10–20 (LSGGLDSATVV). Zn(2+) contacts are provided by C189, C199, C202, and C205.

This sequence belongs to the QueC family. Requires Zn(2+) as cofactor.

It catalyses the reaction 7-carboxy-7-deazaguanine + NH4(+) + ATP = 7-cyano-7-deazaguanine + ADP + phosphate + H2O + H(+). It functions in the pathway purine metabolism; 7-cyano-7-deazaguanine biosynthesis. Its function is as follows. Catalyzes the ATP-dependent conversion of 7-carboxy-7-deazaguanine (CDG) to 7-cyano-7-deazaguanine (preQ(0)). The protein is 7-cyano-7-deazaguanine synthase of Pseudomonas putida (strain ATCC 47054 / DSM 6125 / CFBP 8728 / NCIMB 11950 / KT2440).